A 318-amino-acid polypeptide reads, in one-letter code: HPr kinase/phosphorylase (318 aa).

Residues His-141 and Lys-162 contribute to the active site. ATP is bound at residue 156 to 163 (GDSAMGKS). Ser-163 contributes to the Mg(2+) binding site. Asp-180 (proton acceptor; for phosphorylation activity. Proton donor; for dephosphorylation activity) is an active-site residue. Positions 204–213 (LEVRGLGILN) are important for the catalytic mechanism of both phosphorylation and dephosphorylation. Glu-205 lines the Mg(2+) pocket. Arg-248 is a catalytic residue. Residues 269-274 (PVAAGR) form an important for the catalytic mechanism of dephosphorylation region.

This sequence belongs to the HPrK/P family. Homohexamer. Requires Mg(2+) as cofactor.

The enzyme catalyses [HPr protein]-L-serine + ATP = [HPr protein]-O-phospho-L-serine + ADP + H(+). It catalyses the reaction [HPr protein]-O-phospho-L-serine + phosphate + H(+) = [HPr protein]-L-serine + diphosphate. Its function is as follows. Catalyzes the ATP- as well as the pyrophosphate-dependent phosphorylation of a specific serine residue in HPr, a phosphocarrier protein of the phosphoenolpyruvate-dependent sugar phosphotransferase system (PTS). HprK/P also catalyzes the pyrophosphate-producing, inorganic phosphate-dependent dephosphorylation (phosphorolysis) of seryl-phosphorylated HPr (P-Ser-HPr). The protein is HPr kinase/phosphorylase of Chromobacterium violaceum (strain ATCC 12472 / DSM 30191 / JCM 1249 / CCUG 213 / NBRC 12614 / NCIMB 9131 / NCTC 9757 / MK).